Consider the following 251-residue polypeptide: Triosephosphate isomerase (251 aa).

9–11 (NWK) contributes to the substrate binding site. His95 acts as the Electrophile in catalysis. The active-site Proton acceptor is Glu167. Substrate contacts are provided by residues Gly173, Ser213, and 234-235 (GG). Ser213 is modified (phosphoserine).

This sequence belongs to the triosephosphate isomerase family. Homodimer.

It localises to the cytoplasm. It catalyses the reaction D-glyceraldehyde 3-phosphate = dihydroxyacetone phosphate. It functions in the pathway carbohydrate biosynthesis; gluconeogenesis. The protein operates within carbohydrate degradation; glycolysis; D-glyceraldehyde 3-phosphate from glycerone phosphate: step 1/1. Functionally, involved in the gluconeogenesis. Catalyzes stereospecifically the conversion of dihydroxyacetone phosphate (DHAP) to D-glyceraldehyde-3-phosphate (G3P). The chain is Triosephosphate isomerase from Bacillus cereus (strain AH820).